Here is a 550-residue protein sequence, read N- to C-terminus: Methionine--tRNA ligase (550 aa).

The 'HIGH' region signature appears at P13 to H23. Residues C144, C147, C157, and C160 each contribute to the Zn(2+) site. The 'KMSKS' region signature appears at K329–S333. K332 contacts ATP.

This sequence belongs to the class-I aminoacyl-tRNA synthetase family. MetG type 1 subfamily. In terms of assembly, monomer. Zn(2+) is required as a cofactor.

The protein resides in the cytoplasm. The enzyme catalyses tRNA(Met) + L-methionine + ATP = L-methionyl-tRNA(Met) + AMP + diphosphate. Functionally, is required not only for elongation of protein synthesis but also for the initiation of all mRNA translation through initiator tRNA(fMet) aminoacylation. This chain is Methionine--tRNA ligase, found in Ruthia magnifica subsp. Calyptogena magnifica.